Reading from the N-terminus, the 409-residue chain is Multifunctional CCA protein (409 aa).

2 residues coordinate ATP: Gly-8 and Arg-11. Positions 8 and 11 each coordinate CTP. Residues Asp-21 and Asp-23 each contribute to the Mg(2+) site. Residues Arg-91, Arg-137, and Arg-140 each contribute to the ATP site. CTP is bound by residues Arg-91, Arg-137, and Arg-140. The 102-residue stretch at 228 to 329 (SGLHTLSVLE…LELLQSFDVY (102 aa)) folds into the HD domain.

It belongs to the tRNA nucleotidyltransferase/poly(A) polymerase family. Bacterial CCA-adding enzyme type 1 subfamily. In terms of assembly, monomer. Can also form homodimers and oligomers. The cofactor is Mg(2+). Ni(2+) is required as a cofactor.

The enzyme catalyses a tRNA precursor + 2 CTP + ATP = a tRNA with a 3' CCA end + 3 diphosphate. It carries out the reaction a tRNA with a 3' CCA end + 2 CTP + ATP = a tRNA with a 3' CCACCA end + 3 diphosphate. Catalyzes the addition and repair of the essential 3'-terminal CCA sequence in tRNAs without using a nucleic acid template. Adds these three nucleotides in the order of C, C, and A to the tRNA nucleotide-73, using CTP and ATP as substrates and producing inorganic pyrophosphate. tRNA 3'-terminal CCA addition is required both for tRNA processing and repair. Also involved in tRNA surveillance by mediating tandem CCA addition to generate a CCACCA at the 3' terminus of unstable tRNAs. While stable tRNAs receive only 3'-terminal CCA, unstable tRNAs are marked with CCACCA and rapidly degraded. This chain is Multifunctional CCA protein, found in Pseudomonas fluorescens (strain Pf0-1).